Here is a 151-residue protein sequence, read N- to C-terminus: Ribonuclease H (151 aa).

Positions Ser2 to Val143 constitute an RNase H type-1 domain. 4 residues coordinate Mg(2+): Asp11, Glu49, Asp71, and Asp135.

This sequence belongs to the RNase H family. As to quaternary structure, monomer. Mg(2+) serves as cofactor.

Its subcellular location is the cytoplasm. The enzyme catalyses Endonucleolytic cleavage to 5'-phosphomonoester.. Its function is as follows. Endonuclease that specifically degrades the RNA of RNA-DNA hybrids. This is Ribonuclease H from Stutzerimonas stutzeri (strain A1501) (Pseudomonas stutzeri).